The sequence spans 35 residues: Beta/delta-theraphotoxin-Pre1a (35 aa).

Disulfide bonds link cysteine 3/cysteine 18, cysteine 10/cysteine 23, and cysteine 17/cysteine 30.

It belongs to the neurotoxin 10 (Hwtx-1) family. Expressed by the venom gland.

It is found in the secreted. Gating-modifier toxin that both inhibits the peak current of human Nav1.1/SCN1A, rat Nav1.2/SCN2A, human Nav1.6/SCN8A, and human Nav1.7/SCN9A and concurrently inhibits fast inactivation of human Nav1.1 and rat Nav1.3/SCN3A. The relative rank order potency for Nav modulation is Nav1.3 (inactivation EC(50)=45 nM) &gt; Nav1.7 &gt; Nav1.2 &gt; Nav1.1 (inactivation) &gt; Nav1.1 &gt; Nav1.6 &gt; Nav1.3 (IC(50)=8 uM). The DII and DIV S3-S4 loops of Nav channel voltage sensors are important for the interaction of this toxin with Nav channels but cannot account for its unique subtype selectivity. It is the variability of the S1-S2 loops between NaV channels which contributes substantially to the selectivity profile observed for this toxin, particularly with regards to fast inactivation. This toxin may bind the channel in the resting state. The polypeptide is Beta/delta-theraphotoxin-Pre1a (Psalmopoeus reduncus (Costa Rican orangemouth tarantula)).